We begin with the raw amino-acid sequence, 1600 residues long: A disintegrin and metalloproteinase with thrombospondin motifs 12 (1600 aa).

Residues 1 to 25 (MPCARGSWLAKLSIVAQLINFGAFC) form the signal peptide. Residues 26-244 (HGRQTQPWPV…TLRSRSLSRR (219 aa)) constitute a propeptide that is removed on maturation. Asn105 is a glycosylation site (N-linked (GlcNAc...) asparagine). A Cysteine switch motif is present at residues 210 to 217 (PICGLKDS). Cys212 contributes to the Zn(2+) binding site. Positions 250–460 (RWVETLVVAD…GRGFCLDDIP (211 aa)) constitute a Peptidase M12B domain. 11 disulfides stabilise this stretch: Cys326-Cys380, Cys355-Cys362, Cys374-Cys455, Cys413-Cys439, Cys482-Cys505, Cys493-Cys511, Cys500-Cys530, Cys524-Cys535, Cys558-Cys595, Cys562-Cys600, and Cys573-Cys585. Position 396 (His396) interacts with Zn(2+). Glu397 is a catalytic residue. Positions 400 and 406 each coordinate Zn(2+). The Disintegrin domain maps to 469–548 (VIAPGVIYDV…GKKPESIPGG (80 aa)). 4 consecutive TSP type-1 domains span residues 546-601 (PGGW…HPCR), 827-887 (KLLY…KDCP), 891-947 (WAGE…RDIL), and 948-1001 (CPSD…QQCP). The spacer 1 stretch occupies residues 705–831 (CQTVKKLFRQ…DNDVEKLLYF (127 aa)). The segment at 1001–1321 (PFSRRVLKPN…HLMKDHSPAY (321 aa)) is spacer 2. Disordered stretches follow at residues 1006-1140 (VLKP…LSSS) and 1158-1179 (PEVE…KDKS). Residues 1038-1047 (PTPLSTPTVP) show a composition bias toward low complexity. The segment covering 1048–1107 (ESMSTSTPTINSLGSTIASQEDANGMGWQNNSTQAEEGSHFPTSSGSTSQVPVTSWSLSI) has biased composition (polar residues). Positions 1130-1140 (TTTSDSGLSSS) are enriched in low complexity. TSP type-1 domains are found at residues 1318–1371 (SPAY…RPCA), 1373–1428 (WRVG…CNLE), 1429–1477 (PCGE…NRHL), and 1478–1538 (CCHW…QACR). The PLAC domain occupies 1541–1581 (ADLTCLKDRLSISFCQTLKSMRKCSVPSVRAQCCLSCPQAP).

Interacts with COMP. It depends on Zn(2+) as a cofactor. In terms of processing, the precursor is cleaved by a furin endopeptidase. Subjected to an intracellular maturation process yielding a 120 kDa N-terminal fragment containing the metalloproteinase, disintegrin, one TSP type-1 and the Cys-rich domains and a 83 kDa C-terminal fragment containing the spacer 2 and four TSP type-1 domains. Post-translationally, glycosylated. Can be O-fucosylated by POFUT2 on a serine or a threonine residue found within the consensus sequence C1-X(2)-(S/T)-C2-G of the TSP type-1 repeat domains where C1 and C2 are the first and second cysteine residue of the repeat, respectively. Fucosylated repeats can then be further glycosylated by the addition of a beta-1,3-glucose residue by the glucosyltransferase, B3GALTL. Fucosylation mediates the efficient secretion of ADAMTS family members. Can also be C-glycosylated with one or two mannose molecules on tryptophan residues within the consensus sequence W-X-X-W of the TPRs, and N-glycosylated. These other glycosylations can also facilitate secretion.

The protein resides in the secreted. It localises to the extracellular space. Its subcellular location is the extracellular matrix. With respect to regulation, inhibited by alpha-2 macroglobulin. Metalloprotease that plays a role in the degradation of COMP. Also cleaves alpha-2 macroglobulin and aggregan. Has anti-tumorigenic properties. In Mus musculus (Mouse), this protein is A disintegrin and metalloproteinase with thrombospondin motifs 12 (Adamts12).